Here is a 341-residue protein sequence, read N- to C-terminus: Glucokinase (341 aa).

Residue Gly-18–Thr-23 coordinates ATP.

It belongs to the bacterial glucokinase family.

It is found in the cytoplasm. It carries out the reaction D-glucose + ATP = D-glucose 6-phosphate + ADP + H(+). The sequence is that of Glucokinase from Rhizobium johnstonii (strain DSM 114642 / LMG 32736 / 3841) (Rhizobium leguminosarum bv. viciae).